A 609-amino-acid chain; its full sequence is Threonine--tRNA ligase (609 aa).

Residues M1–E143 are editing domain. 2 catalytic regions span residues P195–P491 and R196–P491. Zn(2+) contacts are provided by C288, H339, and H460.

The protein belongs to the class-II aminoacyl-tRNA synthetase family. Homodimer. Requires Zn(2+) as cofactor.

The protein resides in the cytoplasm. It catalyses the reaction tRNA(Thr) + L-threonine + ATP = L-threonyl-tRNA(Thr) + AMP + diphosphate + H(+). Its function is as follows. Catalyzes the attachment of threonine to tRNA(Thr) in a two-step reaction: L-threonine is first activated by ATP to form Thr-AMP and then transferred to the acceptor end of tRNA(Thr). Also edits incorrectly charged L-seryl-tRNA(Thr). This chain is Threonine--tRNA ligase, found in Pyrobaculum islandicum (strain DSM 4184 / JCM 9189 / GEO3).